Consider the following 537-residue polypeptide: Protoporphyrinogen oxidase 1, chloroplastic (537 aa).

Residues methionine 1–cysteine 34 constitute a chloroplast transit peptide. An N-acetylserine modification is found at serine 35. FAD is bound by residues glycine 63–glycine 68, glutamate 90–alanine 91, and glycine 112–serine 115. Residues arginine 256–leucine 268 show a composition bias toward basic and acidic residues. Residues arginine 256 to threonine 275 form a disordered region. Residue valine 511–leucine 513 participates in FAD binding.

Belongs to the protoporphyrinogen/coproporphyrinogen oxidase family. Protoporphyrinogen oxidase subfamily. It depends on FAD as a cofactor. Expressed at high levels in the leaves and at low levels in the roots and floral buds.

The protein resides in the plastid. The protein localises to the chloroplast. The enzyme catalyses protoporphyrinogen IX + 3 O2 = protoporphyrin IX + 3 H2O2. The protein operates within porphyrin-containing compound metabolism; protoporphyrin-IX biosynthesis; protoporphyrin-IX from protoporphyrinogen-IX: step 1/1. It functions in the pathway porphyrin-containing compound metabolism; chlorophyll biosynthesis. With respect to regulation, inhibited by acifluorfen. Catalyzes the 6-electron oxidation of protoporphyrinogen-IX to form protoporphyrin-IX. This chain is Protoporphyrinogen oxidase 1, chloroplastic (PPOX1), found in Arabidopsis thaliana (Mouse-ear cress).